A 129-amino-acid polypeptide reads, in one-letter code: Protein yippee-like (129 aa).

Positions 12–109 (KIYSCKHCGT…LERFKITGPD (98 aa)) constitute a Yippee domain. Positions 16, 19, 72, and 75 each coordinate Zn(2+).

The protein belongs to the yippee family.

This Solanum tuberosum (Potato) protein is Protein yippee-like.